A 428-amino-acid chain; its full sequence is 3-deoxy-D-manno-octulosonic acid transferase (428 aa).

Glu64 serves as the catalytic Proton acceptor. CMP-binding positions include 274 to 275 (PR), 316 to 318 (LGE), and 342 to 345 (NLIE).

It belongs to the glycosyltransferase group 1 family. Glycosyltransferase 30 subfamily.

It is found in the cell inner membrane. It carries out the reaction lipid IVA (E. coli) + CMP-3-deoxy-beta-D-manno-octulosonate = alpha-Kdo-(2-&gt;6)-lipid IVA (E. coli) + CMP + H(+). Its pathway is bacterial outer membrane biogenesis; LPS core biosynthesis. Functionally, involved in lipopolysaccharide (LPS) biosynthesis. Catalyzes the transfer of a single 3-deoxy-D-manno-octulosonate (Kdo) residue from CMP-Kdo to lipid IV(A), the tetraacyldisaccharide-1,4'-bisphosphate precursor of lipid A. This chain is 3-deoxy-D-manno-octulosonic acid transferase (waaA), found in Bordetella pertussis.